The primary structure comprises 107 residues: Thioredoxin (107 aa).

Positions 2-107 (SVSQVTDASF…LASTLNKYIS (106 aa)) constitute a Thioredoxin domain. Active-site nucleophile residues include Cys31 and Cys34. Cys31 and Cys34 are disulfide-bonded.

Belongs to the thioredoxin family.

It is found in the plastid. It localises to the chloroplast. Participates in various redox reactions through the reversible oxidation of its active center dithiol to a disulfide and catalyzes dithiol-disulfide exchange reactions. This is Thioredoxin (trxA) from Pyropia yezoensis (Susabi-nori).